The chain runs to 434 residues: Gamma-enolase (434 aa).

Position 2 is an N-acetylserine (Ser-2). The residue at position 5 (Lys-5) is an N6-acetyllysine. Residue Thr-26 is modified to Phosphothreonine. Ser-40 contacts Mg(2+). A Phosphotyrosine modification is found at Tyr-44. Lys-60 carries the post-translational modification N6-acetyllysine; alternate. Lys-60 is modified (N6-succinyllysine; alternate). An N6-acetyllysine modification is found at Lys-64. Lys-89 is modified (N6-acetyllysine; alternate). Residue Lys-89 is modified to N6-succinyllysine; alternate. Positions 158 and 167 each coordinate substrate. N6-acetyllysine is present on residues Lys-193, Lys-197, and Lys-199. The residue at position 202 (Lys-202) is an N6-acetyllysine; alternate. Lys-202 is covalently cross-linked (Glycyl lysine isopeptide (Lys-Gly) (interchain with G-Cter in SUMO2); alternate). Glu-210 acts as the Proton donor in catalysis. N6-acetyllysine; alternate occurs at positions 228 and 233. Lys-228 bears the N6-succinyllysine; alternate mark. At Lys-233 the chain carries N6-(2-hydroxyisobutyryl)lysine; alternate. Mg(2+) is bound at residue Asp-245. Residue Lys-256 is modified to N6-acetyllysine. Ser-263 bears the Phosphoserine mark. Tyr-287 is subject to Phosphotyrosine. A Phosphoserine modification is found at Ser-291. Positions 293 and 318 each coordinate Mg(2+). Glu-293 and Asp-318 together coordinate substrate. Lys-335 and Lys-343 each carry N6-acetyllysine. Residue Lys-343 is the Proton acceptor of the active site. Substrate-binding positions include 370–373 (SHRS) and Lys-394. N6-acetyllysine is present on Lys-406.

Belongs to the enolase family. In terms of assembly, mammalian enolase is composed of 3 isozyme subunits, alpha, beta and gamma, which can form homodimers or heterodimers which are cell-type and development-specific. It depends on Mg(2+) as a cofactor. Skeletal muscle (at protein level). The alpha/alpha homodimer is expressed in embryo and in most adult tissues. The alpha/beta heterodimer and the beta/beta homodimer are found in striated muscle, and the alpha/gamma heterodimer and the gamma/gamma homodimer in neurons.

It localises to the cytoplasm. The protein resides in the cell membrane. It carries out the reaction (2R)-2-phosphoglycerate = phosphoenolpyruvate + H2O. It functions in the pathway carbohydrate degradation; glycolysis; pyruvate from D-glyceraldehyde 3-phosphate: step 4/5. In terms of biological role, has neurotrophic and neuroprotective properties on a broad spectrum of central nervous system (CNS) neurons. Binds, in a calcium-dependent manner, to cultured neocortical neurons and promotes cell survival. This is Gamma-enolase (Eno2) from Mus musculus (Mouse).